The chain runs to 183 residues: Ribosome-binding factor A (183 aa).

The disordered stretch occupies residues P132–E183.

This sequence belongs to the RbfA family. Monomer. Binds 30S ribosomal subunits, but not 50S ribosomal subunits or 70S ribosomes.

It is found in the cytoplasm. Its function is as follows. One of several proteins that assist in the late maturation steps of the functional core of the 30S ribosomal subunit. Associates with free 30S ribosomal subunits (but not with 30S subunits that are part of 70S ribosomes or polysomes). Required for efficient processing of 16S rRNA. May interact with the 5'-terminal helix region of 16S rRNA. This is Ribosome-binding factor A from Mycobacterium tuberculosis (strain ATCC 25177 / H37Ra).